Here is an 801-residue protein sequence, read N- to C-terminus: Phenylalanine--tRNA ligase beta subunit (801 aa).

The tRNA-binding domain maps to 39-147 (GGGLDEVVVA…TDLPLGVPVF (109 aa)). One can recognise a B5 domain in the interval 401–477 (LPRRTVRFRV…RLNGYNNIPV (77 aa)). Aspartate 455, aspartate 461, glutamate 464, and glutamate 465 together coordinate Mg(2+). In terms of domain architecture, FDX-ACB spans 708 to 801 (SRFPDTFRDI…LVKKLAVTIR (94 aa)).

Belongs to the phenylalanyl-tRNA synthetase beta subunit family. Type 1 subfamily. As to quaternary structure, tetramer of two alpha and two beta subunits. It depends on Mg(2+) as a cofactor.

The protein resides in the cytoplasm. The catalysed reaction is tRNA(Phe) + L-phenylalanine + ATP = L-phenylalanyl-tRNA(Phe) + AMP + diphosphate + H(+). This chain is Phenylalanine--tRNA ligase beta subunit, found in Geobacter metallireducens (strain ATCC 53774 / DSM 7210 / GS-15).